A 360-amino-acid polypeptide reads, in one-letter code: DNA replication and repair protein RecF (360 aa).

30-37 provides a ligand contact to ATP; the sequence is GRNAQGKT.

Belongs to the RecF family.

It is found in the cytoplasm. Functionally, the RecF protein is involved in DNA metabolism; it is required for DNA replication and normal SOS inducibility. RecF binds preferentially to single-stranded, linear DNA. It also seems to bind ATP. The protein is DNA replication and repair protein RecF of Desulforudis audaxviator (strain MP104C).